The chain runs to 155 residues: Ribosomal RNA large subunit methyltransferase H (155 aa).

S-adenosyl-L-methionine contacts are provided by residues Leu72, Gly103, and 122–127 (FGRMVW).

The protein belongs to the RNA methyltransferase RlmH family. In terms of assembly, homodimer.

Its subcellular location is the cytoplasm. It carries out the reaction pseudouridine(1915) in 23S rRNA + S-adenosyl-L-methionine = N(3)-methylpseudouridine(1915) in 23S rRNA + S-adenosyl-L-homocysteine + H(+). Specifically methylates the pseudouridine at position 1915 (m3Psi1915) in 23S rRNA. This chain is Ribosomal RNA large subunit methyltransferase H, found in Cereibacter sphaeroides (strain ATCC 17023 / DSM 158 / JCM 6121 / CCUG 31486 / LMG 2827 / NBRC 12203 / NCIMB 8253 / ATH 2.4.1.) (Rhodobacter sphaeroides).